A 590-amino-acid polypeptide reads, in one-letter code: Aspartate--tRNA ligase (590 aa).

Glu175 contacts L-aspartate. Residues 199 to 202 form an aspartate region; that stretch reads QIFK. Arg221 contributes to the L-aspartate binding site. Residues 221–223 and Gln230 contribute to the ATP site; that span reads RDE. His449 serves as a coordination point for L-aspartate. Glu483 is a binding site for ATP. Arg490 contributes to the L-aspartate binding site. 535-538 is a binding site for ATP; that stretch reads GLDR.

Belongs to the class-II aminoacyl-tRNA synthetase family. Type 1 subfamily. In terms of assembly, homodimer.

It localises to the cytoplasm. The catalysed reaction is tRNA(Asp) + L-aspartate + ATP = L-aspartyl-tRNA(Asp) + AMP + diphosphate. Catalyzes the attachment of L-aspartate to tRNA(Asp) in a two-step reaction: L-aspartate is first activated by ATP to form Asp-AMP and then transferred to the acceptor end of tRNA(Asp). This is Aspartate--tRNA ligase from Geobacillus kaustophilus (strain HTA426).